The primary structure comprises 232 residues: Fibrillarin-like rRNA/tRNA 2'-O-methyltransferase (232 aa).

S-adenosyl-L-methionine-binding positions include 89–90 (TT), 108–109 (EF), 133–134 (DA), and 153–156 (DIAQ).

The protein belongs to the methyltransferase superfamily. Fibrillarin family. Interacts with nop5. Component of box C/D small ribonucleoprotein (sRNP) particles that contain rpl7ae, FlpA and nop5, plus a guide RNA.

Its function is as follows. Involved in pre-rRNA and tRNA processing. Utilizes the methyl donor S-adenosyl-L-methionine to catalyze the site-specific 2'-hydroxyl methylation of ribose moieties in rRNA and tRNA. Site specificity is provided by a guide RNA that base pairs with the substrate. Methylation occurs at a characteristic distance from the sequence involved in base pairing with the guide RNA. The chain is Fibrillarin-like rRNA/tRNA 2'-O-methyltransferase from Saccharolobus islandicus (strain L.S.2.15 / Lassen #1) (Sulfolobus islandicus).